The following is a 149-amino-acid chain: SsrA-binding protein (149 aa).

The protein belongs to the SmpB family.

The protein resides in the cytoplasm. Its function is as follows. Required for rescue of stalled ribosomes mediated by trans-translation. Binds to transfer-messenger RNA (tmRNA), required for stable association of tmRNA with ribosomes. tmRNA and SmpB together mimic tRNA shape, replacing the anticodon stem-loop with SmpB. tmRNA is encoded by the ssrA gene; the 2 termini fold to resemble tRNA(Ala) and it encodes a 'tag peptide', a short internal open reading frame. During trans-translation Ala-aminoacylated tmRNA acts like a tRNA, entering the A-site of stalled ribosomes, displacing the stalled mRNA. The ribosome then switches to translate the ORF on the tmRNA; the nascent peptide is terminated with the 'tag peptide' encoded by the tmRNA and targeted for degradation. The ribosome is freed to recommence translation, which seems to be the essential function of trans-translation. This Carboxydothermus hydrogenoformans (strain ATCC BAA-161 / DSM 6008 / Z-2901) protein is SsrA-binding protein.